We begin with the raw amino-acid sequence, 352 residues long: Chorismate synthase (352 aa).

Residues Arg-48 and Arg-54 each coordinate NADP(+). FMN contacts are provided by residues 125 to 127, 238 to 239, Ala-278, 293 to 297, and Arg-319; these read RAS, NA, and KPASS.

The protein belongs to the chorismate synthase family. Homotetramer. The cofactor is FMNH2.

It carries out the reaction 5-O-(1-carboxyvinyl)-3-phosphoshikimate = chorismate + phosphate. The protein operates within metabolic intermediate biosynthesis; chorismate biosynthesis; chorismate from D-erythrose 4-phosphate and phosphoenolpyruvate: step 7/7. In terms of biological role, catalyzes the anti-1,4-elimination of the C-3 phosphate and the C-6 proR hydrogen from 5-enolpyruvylshikimate-3-phosphate (EPSP) to yield chorismate, which is the branch point compound that serves as the starting substrate for the three terminal pathways of aromatic amino acid biosynthesis. This reaction introduces a second double bond into the aromatic ring system. The sequence is that of Chorismate synthase from Coxiella burnetii (strain RSA 493 / Nine Mile phase I).